The following is a 145-amino-acid chain: Cystatin-like 1 (145 aa).

An N-terminal signal peptide occupies residues 1 to 19; the sequence is MGIGCWRNPLLLLIALVLS. A Cystatin domain is found at 37–115; that stretch reads SKKNMNSTLN…KKLRKSLICE (79 aa). N42 carries N-linked (GlcNAc...) asparagine glycosylation. 2 disulfides stabilise this stretch: C91–C101 and C114–C134.

The protein belongs to the cystatin family.

It is found in the secreted. The chain is Cystatin-like 1 (CSTL1) from Homo sapiens (Human).